The chain runs to 239 residues: MINFLLLVLILSVLESQENVHTDELPKCMFGNNVCAKLQKNFQGTYLQQLCICEDEVCVKMLKNTNRTIAEPLCSRQTCSTSWRSDSHSKSATQGDNQYQFCSDIRNEFTKTCTVNQNAYKEATITTIATNKKEILHHYYCYCPPEFKYVYSTTNRVVNDTHKVESKFFKCEAIPSCNGDEVCKIAVERTNSYTVSKHCLCYNDKICPDDPKEAFSNKTQNDGSTYYEFKCPDLTICIE.

Positions 1–16 are cleaved as a signal peptide; sequence MINFLLLVLILSVLES.

The protein belongs to the scoloptoxin-11 family. Contains 9 disulfide bonds. Expressed by the venom gland.

The protein resides in the secreted. The polypeptide is U-scoloptoxin(11)-Sm3a (Scolopendra morsitans (Tanzanian blue ringleg centipede)).